Reading from the N-terminus, the 498-residue chain is NAD(P)H-quinone oxidoreductase chain 4, chloroplastic (498 aa).

A run of 14 helical transmembrane segments spans residues 4 to 24 (FPWL…IVLF), 37 to 57 (YCIC…HFEL), 80 to 100 (FGID…TTLA), 112 to 129 (KLFY…LGTF), 134 to 154 (ILLF…LLSM), 167 to 187 (FILY…GMSL), 208 to 228 (ALEI…SPII), 242 to 262 (HYST…YGLV), 272 to 292 (AHSI…IYAA), 305 to 325 (IAYS…SISE), 330 to 350 (GAIL…FLAG), 386 to 406 (LALP…GIIT), 416 to 436 (ILIT…SLSI), and 463 to 483 (FISI…DFIF).

This sequence belongs to the complex I subunit 4 family.

Its subcellular location is the plastid. The protein resides in the chloroplast thylakoid membrane. The catalysed reaction is a plastoquinone + NADH + (n+1) H(+)(in) = a plastoquinol + NAD(+) + n H(+)(out). It catalyses the reaction a plastoquinone + NADPH + (n+1) H(+)(in) = a plastoquinol + NADP(+) + n H(+)(out). The sequence is that of NAD(P)H-quinone oxidoreductase chain 4, chloroplastic from Phaseolus vulgaris (Kidney bean).